Reading from the N-terminus, the 344-residue chain is Melanocyte-stimulating hormone receptor (344 aa).

Topologically, residues 1-37 are extracellular; that stretch reads MPMQGAQRKLLGSLNSTPTATSNPGLAANHTGAPCLE. N-linked (GlcNAc...) asparagine glycosylation occurs at asparagine 29. Residues 38-63 form a helical membrane-spanning segment; the sequence is VSIPDGLFLSLGLVSLVENVLVVAAI. Over 64 to 72 the chain is Cytoplasmic; that stretch reads AKNRNLHSS. The helical transmembrane segment at 73–93 threads the bilayer; sequence MYYFICCLALSDLLVSGSNML. Over 94-118 the chain is Extracellular; sequence ETAIILLLEAGTLATRASVVQQLHN. A helical membrane pass occupies residues 119–140; it reads TIDVLTCSSMLCSLCFLGAIAV. At 141-163 the chain is on the cytoplasmic side; sequence DRYISIFYALRYHSIMTLPRAQR. The chain crosses the membrane as a helical span at residues 164–183; sequence AIAAIWVASVLSSTLFITYY. Residues 184–191 lie on the Extracellular side of the membrane; that stretch reads DHAAVLLC. The chain crosses the membrane as a helical span at residues 192–211; the sequence is LVVFFLAMLVLMAVLYVHML. Over 212 to 240 the chain is Cytoplasmic; the sequence is ARACQHAQGIIRLHNRQLPAHKGFGLRGA. A helical transmembrane segment spans residues 241-266; sequence ATLTILLGIFFLCWGPFFLHLTLVVF. Over 267 to 279 the chain is Extracellular; the sequence is CPQHLTCNCIFKN. The chain crosses the membrane as a helical span at residues 280 to 300; that stretch reads FKVFLTLIICNTIIDPLIYAF. Topologically, residues 301–344 are cytoplasmic; the sequence is RSQELRRTLKEVLLCSSWPGCWAEGGGDSVWPGSCVTLRGPLPP. Cysteine 315 carries S-palmitoyl cysteine lipidation.

It belongs to the G-protein coupled receptor 1 family. In terms of assembly, interacts with MGRN1, but does not undergo MGRN1-mediated ubiquitination; this interaction competes with GNAS-binding and thus inhibits agonist-induced cAMP production. Interacts with OPN3; the interaction results in a decrease in MC1R-mediated cAMP signaling and ultimately a decrease in melanin production in melanocytes.

It localises to the cell membrane. Its function is as follows. Receptor for MSH (alpha, beta and gamma) and ACTH. The activity of this receptor is mediated by G proteins which activate adenylate cyclase. Mediates melanogenesis, the production of eumelanin (black/brown) and phaeomelanin (red/yellow), via regulation of cAMP signaling in melanocytes. The protein is Melanocyte-stimulating hormone receptor (MC1R) of Callithrix jacchus (White-tufted-ear marmoset).